The following is a 162-amino-acid chain: MELIVDFSSDLQTEKYNMFIDTLYENNHLENYIKKVLNLEKIESDRPLYLSLLLTDNENIQVINREYRDKDAPTDVISFAYHETEDFNIGSYDTLGDIIISLERVEEQASEYNHSFEREFYYVLTHGILHILGYDHIEEEDKKLMREREEAILSSFGYTRDK.

Residues His-126, His-130, and His-136 each contribute to the Zn(2+) site.

It belongs to the endoribonuclease YbeY family. Zn(2+) serves as cofactor.

It localises to the cytoplasm. Its function is as follows. Single strand-specific metallo-endoribonuclease involved in late-stage 70S ribosome quality control and in maturation of the 3' terminus of the 16S rRNA. The sequence is that of Endoribonuclease YbeY from Fusobacterium nucleatum subsp. nucleatum (strain ATCC 25586 / DSM 15643 / BCRC 10681 / CIP 101130 / JCM 8532 / KCTC 2640 / LMG 13131 / VPI 4355).